Consider the following 285-residue polypeptide: Chlorite dismutase (285 aa).

The first 38 residues, 1–38, serve as a signal peptide directing secretion; that stretch reads MKVRCVSLVAAGLLTIAGSAIGQPAPAPMPAMAPAAKP. Ca(2+) is bound at residue Glu-105. Residue His-205 coordinates heme. The Proton acceptor role is filled by Arg-218. Ca(2+) contacts are provided by Asp-227 and Thr-266.

This sequence belongs to the chlorite dismutase family. As to quaternary structure, homopentamer. Requires heme b as cofactor.

The protein resides in the periplasm. The enzyme catalyses chloride + O2 = chlorite. Catalyzes the heme-dependent decomposition of chlorite to O(2) and chloride with high efficiency and specificity. Used to detoxify chlorite, a by-product of the reduction of perchlorate, a primarily anthropogenic pollutant, in perchlorate-respiring bacteria. The protein is Chlorite dismutase (cld) of Ideonella dechloratans.